A 328-amino-acid chain; its full sequence is Alanine racemase (328 aa).

Lys33 acts as the Proton acceptor; specific for D-alanine in catalysis. The residue at position 33 (Lys33) is an N6-(pyridoxal phosphate)lysine. Arg118 contacts substrate. The active-site Proton acceptor; specific for L-alanine is the Tyr237. Residue Met283 participates in substrate binding.

Belongs to the alanine racemase family. The cofactor is pyridoxal 5'-phosphate.

It carries out the reaction L-alanine = D-alanine. It functions in the pathway amino-acid biosynthesis; D-alanine biosynthesis; D-alanine from L-alanine: step 1/1. Catalyzes the interconversion of L-alanine and D-alanine. May also act on other amino acids. The protein is Alanine racemase (alr) of Campylobacter jejuni subsp. doylei (strain ATCC BAA-1458 / RM4099 / 269.97).